We begin with the raw amino-acid sequence, 551 residues long: NAD(P)H-quinone oxidoreductase chain 4 (551 aa).

14 consecutive transmembrane segments (helical) span residues 25-45 (FPWLSLSILFPIVGSLMVPFI), 56-76 (WFALGIALTTFLITVAAYLNG), 111-131 (LILLTSFITTLAVLAAWPVTF), 133-153 (PKLFFFLMLAMDGGQIAVFAV), 157-177 (LLFFLAWELELLPVYLLLAIW), 189-209 (FILYTAGSSLFILLAALAMGF), 233-253 (LLCYAGLLIAFGVKLPIVPLH), 264-284 (TAPVHMLLAGILLKMGGYALM), 298-318 (FAPLLVVLGVVNIIYAALTSF), 335-355 (MGFVLIGIGSFSALGTSGAML), 356-376 (QMISHGLIGASLFFLVGATYD), 397-417 (FALWTVCSLASLALPGMSGFV), 438-458 (IVIDGLAAVGVILTPIYLLSM), and 485-505 (VYIIGCLLVPIIGIGLYPRLM).

It belongs to the complex I subunit 4 family.

It localises to the cellular thylakoid membrane. The catalysed reaction is a plastoquinone + NADH + (n+1) H(+)(in) = a plastoquinol + NAD(+) + n H(+)(out). It carries out the reaction a plastoquinone + NADPH + (n+1) H(+)(in) = a plastoquinol + NADP(+) + n H(+)(out). In terms of biological role, NDH-1 shuttles electrons from NAD(P)H, via FMN and iron-sulfur (Fe-S) centers, to quinones in the respiratory chain. The immediate electron acceptor for the enzyme in this species is believed to be plastoquinone. Couples the redox reaction to proton translocation (for every two electrons transferred, four hydrogen ions are translocated across the cytoplasmic membrane), and thus conserves the redox energy in a proton gradient. The chain is NAD(P)H-quinone oxidoreductase chain 4 from Synechococcus sp. (strain WH7803).